The sequence spans 259 residues: MADRSLHLVVLILLGTALCAAQPRGRILRGQEAPSHSRPYMASVQVNGKHVCGGFLIAEQWVMSAAHCLEDVADGKVQVLLGAHSLSQPEPSKRLYDVLRVVPHPGSRTETIDHDLLLLQLSEKAVLGPAVQLLPWQREDRDVAAGTLCDVAGWGVVSHTGRKPDRLQHLLLPVLDRATCNLRTYHDGTITERMMCAESNRRDTCKGDSGGPLVCGSVAEGVVTSGSRICGNHKKPGIYTRLASYVAWIDGVMAEGAAA.

Positions M1–A21 are cleaved as a signal peptide. A propeptide spans Q22–R26 (activation peptide). Positions I27–A254 constitute a Peptidase S1 domain. Cysteines 52 and 68 form a disulfide. Active-site charge relay system residues include H67 and D115. 3 disulfides stabilise this stretch: C149-C215, C180-C196, and C205-C230. The active-site Charge relay system is the S209. The interval T224–R228 is self-inhibitor loop.

This sequence belongs to the peptidase S1 family. Post-translationally, CFD is activated by the removal of 5 residues at the N-terminus, named activation peptide, by the MASP-3 isoform of MASP1.

It is found in the secreted. It carries out the reaction Selective cleavage of Arg-|-Lys bond in complement factor B when in complex with complement subcomponent C3b or with cobra venom factor.. Its activity is regulated as follows. Circulates in plasma in a mature but self-inhibited form. Activated by factor B (CFB), which displaces the self-inhibition loop. Associates with CFB complexed with complement C3b. Its function is as follows. Serine protease that initiates the alternative pathway of the complement system, a cascade of proteins that leads to phagocytosis and breakdown of pathogens and signaling that strengthens the adaptive immune system. In contrast to other complement pathways (classical, lectin and GZMK) that are directly activated by pathogens or antigen-antibody complexes, the alternative complement pathway is initiated by the spontaneous hydrolysis of complement C3. The alternative complement pathway acts as an amplification loop that enhances complement activation by mediating the formation of C3 and C5 convertases. Activated CFD cleaves factor B (CFB) when the latter is complexed with complement C3b, activating the C3 convertase of the alternative pathway. In Bos taurus (Bovine), this protein is Complement factor D (CFD).